We begin with the raw amino-acid sequence, 423 residues long: CinA-like protein (423 aa).

It belongs to the CinA family.

The chain is CinA-like protein from Chlorobium chlorochromatii (strain CaD3).